Consider the following 72-residue polypeptide: MVVRAPKKKVCMYCEQKREPDYKNYEELRNFLTERGRIKDRKQTGLCAKHQRRLAVQIKRARQLGLLPYVVY.

This sequence belongs to the bacterial ribosomal protein bS18 family. Part of the 30S ribosomal subunit. Forms a tight heterodimer with protein bS6.

In terms of biological role, binds as a heterodimer with protein bS6 to the central domain of the 16S rRNA, where it helps stabilize the platform of the 30S subunit. This Aquifex aeolicus (strain VF5) protein is Small ribosomal subunit protein bS18.